The sequence spans 219 residues: MGQKTNPNGLRFGKFKKHFSCWYTENKNYSHFVKQDIFIRKFLMEKIKNVFISLIEIEKDNKETVIFIHYLNFSKFNKVETNSEKNEINLFKLKNLLLKSLNSFFNVKINFNEFIIKLIEIENPILDVRFIANDIRYKLEKRMNFRKIVNSTIANIINKGIKGIKIKLSGRLNDAEMAREESFREGKVPLNTLKANIDYFHCTAKTLSGSLGIKVWLNK.

Residues 39 to 111 (IRKFLMEKIK…NSFFNVKINF (73 aa)) enclose the KH type-2 domain.

It belongs to the universal ribosomal protein uS3 family. As to quaternary structure, part of the 30S ribosomal subunit.

Its subcellular location is the plastid. This is Small ribosomal subunit protein uS3c (rps3) from Euglena longa (Euglenophycean alga).